Here is a 309-residue protein sequence, read N- to C-terminus: 4-hydroxy-3-methylbut-2-enyl diphosphate reductase (309 aa).

C13 contributes to the [4Fe-4S] cluster binding site. H42 and H75 together coordinate (2E)-4-hydroxy-3-methylbut-2-enyl diphosphate. Residues H42 and H75 each contribute to the dimethylallyl diphosphate site. The isopentenyl diphosphate site is built by H42 and H75. C97 contacts [4Fe-4S] cluster. H125 is a (2E)-4-hydroxy-3-methylbut-2-enyl diphosphate binding site. H125 provides a ligand contact to dimethylallyl diphosphate. H125 is a binding site for isopentenyl diphosphate. E127 acts as the Proton donor in catalysis. A (2E)-4-hydroxy-3-methylbut-2-enyl diphosphate-binding site is contributed by T165. Position 195 (C195) interacts with [4Fe-4S] cluster. 4 residues coordinate (2E)-4-hydroxy-3-methylbut-2-enyl diphosphate: S223, S224, N225, and S267. Dimethylallyl diphosphate-binding residues include S223, S224, N225, and S267. Isopentenyl diphosphate-binding residues include S223, S224, N225, and S267.

It belongs to the IspH family. The cofactor is [4Fe-4S] cluster.

The enzyme catalyses isopentenyl diphosphate + 2 oxidized [2Fe-2S]-[ferredoxin] + H2O = (2E)-4-hydroxy-3-methylbut-2-enyl diphosphate + 2 reduced [2Fe-2S]-[ferredoxin] + 2 H(+). It carries out the reaction dimethylallyl diphosphate + 2 oxidized [2Fe-2S]-[ferredoxin] + H2O = (2E)-4-hydroxy-3-methylbut-2-enyl diphosphate + 2 reduced [2Fe-2S]-[ferredoxin] + 2 H(+). Its pathway is isoprenoid biosynthesis; dimethylallyl diphosphate biosynthesis; dimethylallyl diphosphate from (2E)-4-hydroxy-3-methylbutenyl diphosphate: step 1/1. It participates in isoprenoid biosynthesis; isopentenyl diphosphate biosynthesis via DXP pathway; isopentenyl diphosphate from 1-deoxy-D-xylulose 5-phosphate: step 6/6. Functionally, catalyzes the conversion of 1-hydroxy-2-methyl-2-(E)-butenyl 4-diphosphate (HMBPP) into a mixture of isopentenyl diphosphate (IPP) and dimethylallyl diphosphate (DMAPP). Acts in the terminal step of the DOXP/MEP pathway for isoprenoid precursor biosynthesis. The chain is 4-hydroxy-3-methylbut-2-enyl diphosphate reductase from Chlamydia caviae (strain ATCC VR-813 / DSM 19441 / 03DC25 / GPIC) (Chlamydophila caviae).